A 207-amino-acid polypeptide reads, in one-letter code: Superoxide dismutase [Mn] (207 aa).

Residues histidine 27, histidine 82, aspartate 169, and histidine 173 each coordinate Mn(2+).

This sequence belongs to the iron/manganese superoxide dismutase family. Requires Mn(2+) as cofactor.

It carries out the reaction 2 superoxide + 2 H(+) = H2O2 + O2. Its function is as follows. Destroys superoxide anion radicals which are normally produced within the cells and which are toxic to biological systems. The sequence is that of Superoxide dismutase [Mn] (sodA) from Yersinia enterocolitica.